The sequence spans 392 residues: D-amino-acid oxidase 2 (392 aa).

Residues Ser10, Ile13, Arg33, Asp34, Ala45, Ser46, Gly50, and Asn52 each contribute to the FAD site. The anthranilate site is built by Phe56, Tyr245, Tyr262, and Arg311. The (R)-lactate site is built by Tyr245, Tyr262, and Arg311. FAD is bound by residues Arg311, Gly361, Ser362, Gly364, and Gln366. Ser362 lines the anthranilate pocket. Ser362 is a (R)-lactate binding site. A Microbody targeting signal motif is present at residues 390-392 (AKL).

It belongs to the DAMOX/DASOX family. FAD serves as cofactor.

The protein resides in the peroxisome matrix. The enzyme catalyses a D-alpha-amino acid + O2 + H2O = a 2-oxocarboxylate + H2O2 + NH4(+). It carries out the reaction D-methionine + O2 + H2O = 4-methylsulfanyl-2-oxobutanoate + H2O2 + NH4(+). The catalysed reaction is D-serine + O2 + H2O = 3-hydroxypyruvate + H2O2 + NH4(+). It catalyses the reaction D-histidine + O2 + H2O = 3-(imidazol-5-yl)pyruvate + H2O2 + NH4(+). The enzyme catalyses D-proline + O2 = 1-pyrroline-2-carboxylate + H2O2. It carries out the reaction D-alanine + O2 + H2O = pyruvate + H2O2 + NH4(+). The catalysed reaction is D-leucine + O2 + H2O = 4-methyl-2-oxopentanoate + H2O2 + NH4(+). It catalyses the reaction D-valine + O2 + H2O = 3-methyl-2-oxobutanoate + H2O2 + NH4(+). Its function is as follows. Catalyzes the oxidative deamination of D-amino acids with broad substrate specificity. Enables the organism to utilize D-amino acids as a source of nutrients. Enables the organism to utilize D-alanine, D-cysteine, D-histidine, D-leucine, D-methionine, D-phenylalanine, D-proline, D-serine, D-threonine, D-aspartate and D-valine as a nitrogen source and may also contribute to utlization of D-tryptophan, D-tyrosine and D-asparagine as a nitrogen source. Protects the organism from the toxicity of D-amino acids, including from D-alanine. May play a role in its interaction with the host. This is D-amino-acid oxidase 2 from Cryptococcus deuterogattii (strain R265) (Cryptococcus gattii VGII (strain R265)).